An 887-amino-acid polypeptide reads, in one-letter code: Alanine--tRNA ligase (887 aa).

Positions 581, 585, 683, and 687 each coordinate Zn(2+).

Belongs to the class-II aminoacyl-tRNA synthetase family. It depends on Zn(2+) as a cofactor.

The protein localises to the cytoplasm. The enzyme catalyses tRNA(Ala) + L-alanine + ATP = L-alanyl-tRNA(Ala) + AMP + diphosphate. In terms of biological role, catalyzes the attachment of alanine to tRNA(Ala) in a two-step reaction: alanine is first activated by ATP to form Ala-AMP and then transferred to the acceptor end of tRNA(Ala). Also edits incorrectly charged Ser-tRNA(Ala) and Gly-tRNA(Ala) via its editing domain. This is Alanine--tRNA ligase from Ehrlichia ruminantium (strain Gardel).